The chain runs to 399 residues: Argininosuccinate synthase (399 aa).

8 to 16 (AYSGGLDTS) is a binding site for ATP. Residues Tyr87 and Ser92 each coordinate L-citrulline. Gly117 provides a ligand contact to ATP. Thr119, Asn123, and Asp124 together coordinate L-aspartate. Position 123 (Asn123) interacts with L-citrulline. Residues Arg127, Ser176, Ser185, Glu261, and Tyr273 each contribute to the L-citrulline site.

It belongs to the argininosuccinate synthase family. Type 1 subfamily. In terms of assembly, homotetramer.

The protein resides in the cytoplasm. The catalysed reaction is L-citrulline + L-aspartate + ATP = 2-(N(omega)-L-arginino)succinate + AMP + diphosphate + H(+). It participates in amino-acid biosynthesis; L-arginine biosynthesis; L-arginine from L-ornithine and carbamoyl phosphate: step 2/3. The chain is Argininosuccinate synthase from Clostridioides difficile (strain 630) (Peptoclostridium difficile).